The sequence spans 1102 residues: Carbamoyl phosphate synthase large chain (1102 aa).

The carboxyphosphate synthetic domain stretch occupies residues 1–408 (MPKRTDIQSV…AFQKALRSLE (408 aa)). Residues arginine 129, arginine 175, glycine 181, glycine 182, glutamate 214, isoleucine 216, glutamate 221, glycine 247, valine 248, histidine 249, glutamine 291, and glutamate 305 each coordinate ATP. Residues 137-334 (EEVRKKIGHG…IAKIAAKLAV (198 aa)) form the ATP-grasp 1 domain. Residues glutamine 291, glutamate 305, and asparagine 307 each coordinate Mg(2+). Residues glutamine 291, glutamate 305, and asparagine 307 each contribute to the Mn(2+) site. The tract at residues 409–551 (KKGSQFTFVG…YFYSSYDEES (143 aa)) is oligomerization domain. Residues 552–954 (EVAPREKPAV…AYAKSQAGAY (403 aa)) are carbamoyl phosphate synthetic domain. Residues 682–873 (GRVLAEAGLP…LAKAAARISL (192 aa)) form the ATP-grasp 2 domain. ATP-binding residues include arginine 718, arginine 757, leucine 759, glutamate 764, glycine 789, isoleucine 790, histidine 791, serine 792, glutamine 832, and glutamate 844. Mg(2+) is bound by residues glutamine 832, glutamate 844, and asparagine 846. The Mn(2+) site is built by glutamine 832, glutamate 844, and asparagine 846. In terms of domain architecture, MGS-like spans 955–1100 (GPLPTKGRAF…QEHAAFLIAA (146 aa)). The interval 955–1102 (GPLPTKGRAF…HAAFLIAARD (148 aa)) is allosteric domain.

The protein belongs to the CarB family. As to quaternary structure, composed of two chains; the small (or glutamine) chain promotes the hydrolysis of glutamine to ammonia, which is used by the large (or ammonia) chain to synthesize carbamoyl phosphate. Tetramer of heterodimers (alpha,beta)4. Mg(2+) serves as cofactor. The cofactor is Mn(2+).

It carries out the reaction hydrogencarbonate + L-glutamine + 2 ATP + H2O = carbamoyl phosphate + L-glutamate + 2 ADP + phosphate + 2 H(+). The enzyme catalyses hydrogencarbonate + NH4(+) + 2 ATP = carbamoyl phosphate + 2 ADP + phosphate + 2 H(+). Its pathway is amino-acid biosynthesis; L-arginine biosynthesis; carbamoyl phosphate from bicarbonate: step 1/1. It participates in pyrimidine metabolism; UMP biosynthesis via de novo pathway; (S)-dihydroorotate from bicarbonate: step 1/3. Its function is as follows. Large subunit of the glutamine-dependent carbamoyl phosphate synthetase (CPSase). CPSase catalyzes the formation of carbamoyl phosphate from the ammonia moiety of glutamine, carbonate, and phosphate donated by ATP, constituting the first step of 2 biosynthetic pathways, one leading to arginine and/or urea and the other to pyrimidine nucleotides. The large subunit (synthetase) binds the substrates ammonia (free or transferred from glutamine from the small subunit), hydrogencarbonate and ATP and carries out an ATP-coupled ligase reaction, activating hydrogencarbonate by forming carboxy phosphate which reacts with ammonia to form carbamoyl phosphate. The sequence is that of Carbamoyl phosphate synthase large chain from Streptomyces coelicolor (strain ATCC BAA-471 / A3(2) / M145).